A 370-amino-acid polypeptide reads, in one-letter code: UDP-N-acetylglucosamine--N-acetylmuramyl-(pentapeptide) pyrophosphoryl-undecaprenol N-acetylglucosamine transferase (370 aa).

UDP-N-acetyl-alpha-D-glucosamine contacts are provided by residues 10-12, N126, S200, I255, and Q300; that span reads TGG.

It belongs to the glycosyltransferase 28 family. MurG subfamily.

The protein resides in the cell membrane. The catalysed reaction is Mur2Ac(oyl-L-Ala-gamma-D-Glu-L-Lys-D-Ala-D-Ala)-di-trans,octa-cis-undecaprenyl diphosphate + UDP-N-acetyl-alpha-D-glucosamine = beta-D-GlcNAc-(1-&gt;4)-Mur2Ac(oyl-L-Ala-gamma-D-Glu-L-Lys-D-Ala-D-Ala)-di-trans,octa-cis-undecaprenyl diphosphate + UDP + H(+). Its pathway is cell wall biogenesis; peptidoglycan biosynthesis. Its function is as follows. Cell wall formation. Catalyzes the transfer of a GlcNAc subunit on undecaprenyl-pyrophosphoryl-MurNAc-pentapeptide (lipid intermediate I) to form undecaprenyl-pyrophosphoryl-MurNAc-(pentapeptide)GlcNAc (lipid intermediate II). This Lactobacillus johnsonii (strain CNCM I-12250 / La1 / NCC 533) protein is UDP-N-acetylglucosamine--N-acetylmuramyl-(pentapeptide) pyrophosphoryl-undecaprenol N-acetylglucosamine transferase.